The following is a 216-amino-acid chain: Guanylate kinase (216 aa).

The region spanning 15-193 (GNLFMVVAPS…ALEELRNVVR (179 aa)) is the Guanylate kinase-like domain. 22-29 (APSGAGKS) is an ATP binding site.

Belongs to the guanylate kinase family.

The protein resides in the cytoplasm. The catalysed reaction is GMP + ATP = GDP + ADP. Essential for recycling GMP and indirectly, cGMP. This chain is Guanylate kinase, found in Cupriavidus pinatubonensis (strain JMP 134 / LMG 1197) (Cupriavidus necator (strain JMP 134)).